The chain runs to 89 residues: Small ribosomal subunit protein uS15 (89 aa).

Belongs to the universal ribosomal protein uS15 family. As to quaternary structure, part of the 30S ribosomal subunit. Forms a bridge to the 50S subunit in the 70S ribosome, contacting the 23S rRNA.

One of the primary rRNA binding proteins, it binds directly to 16S rRNA where it helps nucleate assembly of the platform of the 30S subunit by binding and bridging several RNA helices of the 16S rRNA. Functionally, forms an intersubunit bridge (bridge B4) with the 23S rRNA of the 50S subunit in the ribosome. This is Small ribosomal subunit protein uS15 from Klebsiella pneumoniae subsp. pneumoniae (strain ATCC 700721 / MGH 78578).